The primary structure comprises 225 residues: Glutathione S-transferase zeta class (225 aa).

The GST N-terminal domain maps to 10–91 (PKLKLYSYFR…YLEEKYPEHP (82 aa)). Glutathione is bound by residues 20–25 (SSCSFR), Gln49, Val63, 75–76 (DS), Gln115, and 119–121 (NLA). The region spanning 96–221 (DIHKKAINYQ…MPDKQPDSTS (126 aa)) is the GST C-terminal domain.

Belongs to the GST superfamily. Zeta family.

The protein resides in the cytoplasm. It carries out the reaction RX + glutathione = an S-substituted glutathione + a halide anion + H(+). The sequence is that of Glutathione S-transferase zeta class from Euphorbia esula (Leafy spurge).